The primary structure comprises 153 residues: Pheromone-binding protein Gp-9 (153 aa).

A signal peptide spans 1–19 (MKTFVLHIFIFALVAFASA). Intrachain disulfides connect cysteine 37/cysteine 77, cysteine 73/cysteine 129, and cysteine 118/cysteine 138.

The protein belongs to the PBP/GOBP family. In terms of assembly, homodimer.

Its subcellular location is the secreted. Colony queen number, a major feature of social organization, is associated with worker genotype for Gp-9. Colonies are headed by either a single reproductive queen (monogyne form) or multiple queens (polygyne form). Differences in worker Gp-9 genotypes between social forms may cause differences in workers' abilities to recognize queens and regulate their numbers. In Solenopsis sp. (strain B0-153) (Fire ant), this protein is Pheromone-binding protein Gp-9.